We begin with the raw amino-acid sequence, 20 residues long: Phenol-soluble modulin alpha 4 peptide (20 aa).

The protein belongs to the phenol-soluble modulin alpha peptides family.

Functionally, peptide which can recruit, activate and subsequently lyse neutrophils, thus eliminating the main cellular defense against infection. The chain is Phenol-soluble modulin alpha 4 peptide (psmA4) from Staphylococcus aureus (strain bovine RF122 / ET3-1).